The following is a 235-amino-acid chain: Ornithine decarboxylase antizyme 3 (235 aa).

A phosphoserine mark is found at Ser9 and Ser12.

It belongs to the ODC antizyme family. Interacts with ODC1 and thereby sterically blocks ODC homodimerization. Interacts with AZIN2; this interaction disrupts the interaction between the antizyme and ODC1. Interacts with GGN. As to expression, testis specific.

Its subcellular location is the nucleus. The protein resides in the cytoplasm. Ornithine decarboxylase (ODC) antizyme protein that negatively regulates ODC activity and intracellular polyamine biosynthesis and uptake in response to increased intracellular polyamine levels. Binds to ODC monomers, inhibiting the assembly of the functional ODC homodimers. Does not target the ODC monomers for degradation, which allows a protein synthesis-independent restoration of ODC activity. Stabilizes AZIN2 by interfering with its ubiquitination. Involved in the translocation of AZNI2 from ER-Golgi intermediate compartment (ERGIC) to the cytosol. Probably plays a key role in spermatogenesis by regulating the intracellular concentration of polyamines in haploid germ cells. This is Ornithine decarboxylase antizyme 3 (OAZ3) from Homo sapiens (Human).